The sequence spans 311 residues: MKRPTSSSRKSKKQGEDLAFSEEGSLPAVTMEQKDEAEMEEVDEEEEEEVDEDMAGGHAAQSPSPSCGLGEKKRRLALEQVRALERSFDTDNKLDPDRKARIARDLGLQPRQVAVWFQNRRARWKTKQLERDFAALRARHDALRADCDALRRDKDALAAEIRELREKLPTKPADTAASVKVEAGNDAAAGAAAATVCKDGSSDDSDSSVVFNDEASPYSGAAFIGFGPSFLVDDASAATVGCSSSLPALESKWHGPYSDDSCKGGVYGFTEEWLAACSGEMAGNDAAGFFSDEHASNLNFGWCASGNEGWE.

The segment at 1–74 (MKRPTSSSRK…PSCGLGEKKR (74 aa)) is disordered. The span at 35–54 (DEAEMEEVDEEEEEEVDEDM) shows a compositional bias: acidic residues. A DNA-binding region (homeobox) is located at residues 69-128 (LGEKKRRLALEQVRALERSFDTDNKLDPDRKARIARDLGLQPRQVAVWFQNRRARWKTKQ). The interval 127 to 171 (KQLERDFAALRARHDALRADCDALRRDKDALAAEIRELREKLPTK) is leucine-zipper.

Belongs to the HD-ZIP homeobox family. Class I subfamily. As to expression, expressed in seedlings, roots, stems, leaf sheaths and blades and panicles.

It is found in the nucleus. In terms of biological role, probable transcription factor. The protein is Homeobox-leucine zipper protein HOX13 (HOX13) of Oryza sativa subsp. japonica (Rice).